A 158-amino-acid polypeptide reads, in one-letter code: UPF0758 protein VC_1786 (158 aa).

The 122-residue stretch at 37–158 folds into the MPN domain; it reads TFARTENTTE…SVSFAERGWL (122 aa). Zn(2+) contacts are provided by His-108, His-110, and Asp-121. Residues 108 to 121 carry the JAMM motif motif; that stretch reads HNHPSGDPEPSQAD.

This sequence belongs to the UPF0758 family.

This Vibrio cholerae serotype O1 (strain ATCC 39315 / El Tor Inaba N16961) protein is UPF0758 protein VC_1786.